The primary structure comprises 386 residues: mRNA-capping enzyme subunit beta (386 aa).

Residues 1 to 137 (MDIGKMINDD…TTTITGCPPS (137 aa)) form a disordered region. 2 stretches are compositionally biased toward polar residues: residues 20 to 32 (VKSL…TGLP) and 41 to 56 (KASS…TNEM). Positions 57-67 (ESGEDDDDEDA) are enriched in acidic residues. The segment covering 93-115 (RHAERDHRPPPHRQDRRDPRMER) has biased composition (basic and acidic residues).

This sequence belongs to the fungal TPase family. In terms of assembly, heterodimer. The mRNA-capping enzyme is composed of two separate chains alpha and beta, respectively a mRNA guanylyltransferase and an mRNA 5'-triphosphate monophosphatase. It depends on Mg(2+) as a cofactor.

The protein localises to the nucleus. The enzyme catalyses a 5'-end triphospho-ribonucleoside in mRNA + H2O = a 5'-end diphospho-ribonucleoside in mRNA + phosphate + H(+). Functionally, first step of mRNA capping. Converts the 5'-triphosphate end of a nascent mRNA chain into a diphosphate end. The polypeptide is mRNA-capping enzyme subunit beta (CET1) (Yarrowia lipolytica (strain CLIB 122 / E 150) (Yeast)).